The following is a 201-amino-acid chain: Probable DNA replication complex GINS protein PSF1 (201 aa).

It belongs to the GINS1/PSF1 family. In terms of assembly, component of the GINS complex which is a heterotetramer of gins1, gins2, gins3 and gins4.

The protein resides in the nucleus. Functionally, the GINS complex plays an essential role in the initiation of DNA replication. The polypeptide is Probable DNA replication complex GINS protein PSF1 (Caenorhabditis briggsae).